A 292-amino-acid chain; its full sequence is MAEITAALVKELREKTDAPMMECKKALTEAEGDLARAEEILRVKLGNKASKAASRVTAEGLIGLFIAADGKQGAVIEVNCETDFVAKNPDFIDFVNKLAGLVAAQNPADVAALSELAFGEGTVETTRTALVGKIGENISIRRFQRIATPNALASYVHGGRIGVLVEFAGAEEVGKDLAMHIAATKPKALNADGVAAADIAAERSVAEQKAAESGKPADIAAKMVEGSVQKFLKEVTLLSQPFVKNDKQTVEQMLKEKGASISQFVLYVVGEGIEKKTTDFAAEVAAAAAGHA.

The tract at residues 82–85 (TDFV) is involved in Mg(2+) ion dislocation from EF-Tu.

Belongs to the EF-Ts family.

The protein localises to the cytoplasm. Functionally, associates with the EF-Tu.GDP complex and induces the exchange of GDP to GTP. It remains bound to the aminoacyl-tRNA.EF-Tu.GTP complex up to the GTP hydrolysis stage on the ribosome. This is Elongation factor Ts from Bordetella avium (strain 197N).